Consider the following 287-residue polypeptide: Glycine--tRNA ligase alpha subunit (287 aa).

This sequence belongs to the class-II aminoacyl-tRNA synthetase family. Tetramer of two alpha and two beta subunits.

Its subcellular location is the cytoplasm. It carries out the reaction tRNA(Gly) + glycine + ATP = glycyl-tRNA(Gly) + AMP + diphosphate. The polypeptide is Glycine--tRNA ligase alpha subunit (Campylobacter jejuni subsp. jejuni serotype O:23/36 (strain 81-176)).